The primary structure comprises 446 residues: Glutamyl-tRNA reductase (446 aa).

Substrate is bound by residues 49-52, Ser-108, 113-115, and Gln-119; these read TCNR and ETQ. Cys-50 serves as the catalytic Nucleophile. 188-193 is an NADP(+) binding site; that stretch reads GAGKMS.

The protein belongs to the glutamyl-tRNA reductase family. Homodimer.

The enzyme catalyses (S)-4-amino-5-oxopentanoate + tRNA(Glu) + NADP(+) = L-glutamyl-tRNA(Glu) + NADPH + H(+). It participates in porphyrin-containing compound metabolism; protoporphyrin-IX biosynthesis; 5-aminolevulinate from L-glutamyl-tRNA(Glu): step 1/2. Catalyzes the NADPH-dependent reduction of glutamyl-tRNA(Glu) to glutamate 1-semialdehyde (GSA). The sequence is that of Glutamyl-tRNA reductase from Desulforudis audaxviator (strain MP104C).